Consider the following 463-residue polypeptide: Phosphomannomutase/phosphoglucomutase (463 aa).

Tyrosine 17 serves as a coordination point for alpha-D-glucose 1-phosphate. Residue tyrosine 17 participates in alpha-D-mannose 1-phosphate binding. Residue serine 108 is the Non-phosphorylated intermediate of the active site. Mg(2+) is bound by residues serine 108, aspartate 242, aspartate 244, and aspartate 246. Position 108 is a phosphoserine (serine 108). Residues lysine 285, histidine 308, 325-329 (EMSGH), and 421-425 (RASNT) each bind alpha-D-glucose 1-phosphate. Residues histidine 308, 325–329 (EMSGH), and 421–425 (RASNT) each bind alpha-D-mannose 1-phosphate.

It belongs to the phosphohexose mutase family. Monomer. It depends on Mg(2+) as a cofactor.

It carries out the reaction alpha-D-mannose 1-phosphate = D-mannose 6-phosphate. The catalysed reaction is alpha-D-glucose 1-phosphate = alpha-D-glucose 6-phosphate. The protein operates within nucleotide-sugar biosynthesis; GDP-alpha-D-mannose biosynthesis; alpha-D-mannose 1-phosphate from D-fructose 6-phosphate: step 2/2. It participates in bacterial outer membrane biogenesis; lipopolysaccharide biosynthesis. Its function is as follows. Highly reversible phosphoryltransferase. The phosphomannomutase activity produces a precursor for alginate polymerization, the alginate layer causes a mucoid phenotype and provides a protective barrier against host immune defenses and antibiotics. Also involved in core lipopolysaccaride (LPS) biosynthesis due to its phosphoglucomutase activity. Essential for rhamnolipid production, an exoproduct correlated with pathogenicity. Required for biofilm production. The reaction proceeds via 2 processive phosphoryl transferase reactions; first from enzyme-phospho-Ser-108 to the substrate (generating a bisphosphorylated substrate intermediate and a dephosphorylated enzyme), a 180 degree rotation of the intermediate (probably aided by movement of domain 4), and subsequent transfer of phosphate back to the enzyme. This Pseudomonas aeruginosa (strain UCBPP-PA14) protein is Phosphomannomutase/phosphoglucomutase (algC).